Consider the following 389-residue polypeptide: MSDLYIGLMSGTSLDGVDGVVVDFSGAHLRVLAHVNAPLSTALTHELLALNSPGTNELHRAALAANALVRVYAHVVAQLLELADIEHSAVAAIGAHGQTVRHQPQSFDGTGYTLQLNNPALLAELTGMDVVADFRSRDVAAGGQGAPLVPAFHQSAFGQPDQTLAVLNLGGMSNLTVLGPCPATESPAGVLDADPPSCFHSHDVLGFDCGPGNALMDTWCLQHIGQPFDADGAWAAAGRVHGELLAALLDEPYFAQSAPKSTGRDLFNSGWLTWKLEKFSSVAPVDVQATLTELTASVCATCVKRYGSESSTLIVCGGGAFNSHLMVRLQALLPRLKVISSQARGLPPLQVEAAAFAWLARNTLLRKTSSLEKVTGASGARILGAIYPA.

An ATP-binding site is contributed by 11–18 (GTSLDGVD).

The protein belongs to the anhydro-N-acetylmuramic acid kinase family.

It carries out the reaction 1,6-anhydro-N-acetyl-beta-muramate + ATP + H2O = N-acetyl-D-muramate 6-phosphate + ADP + H(+). Its pathway is amino-sugar metabolism; 1,6-anhydro-N-acetylmuramate degradation. The protein operates within cell wall biogenesis; peptidoglycan recycling. Its function is as follows. Catalyzes the specific phosphorylation of 1,6-anhydro-N-acetylmuramic acid (anhMurNAc) with the simultaneous cleavage of the 1,6-anhydro ring, generating MurNAc-6-P. Is required for the utilization of anhMurNAc either imported from the medium or derived from its own cell wall murein, and thus plays a role in cell wall recycling. The polypeptide is Anhydro-N-acetylmuramic acid kinase (Albidiferax ferrireducens (strain ATCC BAA-621 / DSM 15236 / T118) (Rhodoferax ferrireducens)).